The primary structure comprises 500 residues: Glycerol kinase (500 aa).

Threonine 12 serves as a coordination point for ADP. ATP-binding residues include threonine 12, threonine 13, and serine 14. Threonine 12 serves as a coordination point for sn-glycerol 3-phosphate. Arginine 16 contacts ADP. Positions 82, 83, 135, and 245 each coordinate sn-glycerol 3-phosphate. Glycerol is bound by residues arginine 82, glutamate 83, tyrosine 135, aspartate 245, and glutamine 246. Positions 267 and 310 each coordinate ADP. ATP is bound by residues threonine 267, glycine 310, glutamine 314, and glycine 411. Residues glycine 411 and asparagine 415 each contribute to the ADP site.

This sequence belongs to the FGGY kinase family. Homotetramer and homodimer (in equilibrium).

The catalysed reaction is glycerol + ATP = sn-glycerol 3-phosphate + ADP + H(+). It participates in polyol metabolism; glycerol degradation via glycerol kinase pathway; sn-glycerol 3-phosphate from glycerol: step 1/1. Activated by phosphorylation and inhibited by fructose 1,6-bisphosphate (FBP). In terms of biological role, key enzyme in the regulation of glycerol uptake and metabolism. Catalyzes the phosphorylation of glycerol to yield sn-glycerol 3-phosphate. The protein is Glycerol kinase of Clostridium perfringens (strain 13 / Type A).